The chain runs to 216 residues: ATP-dependent Clp protease proteolytic subunit (216 aa).

The active-site Nucleophile is Ser120. His145 is a catalytic residue.

Belongs to the peptidase S14 family. Fourteen ClpP subunits assemble into 2 heptameric rings which stack back to back to give a disk-like structure with a central cavity, resembling the structure of eukaryotic proteasomes.

The protein resides in the cytoplasm. It catalyses the reaction Hydrolysis of proteins to small peptides in the presence of ATP and magnesium. alpha-casein is the usual test substrate. In the absence of ATP, only oligopeptides shorter than five residues are hydrolyzed (such as succinyl-Leu-Tyr-|-NHMec, and Leu-Tyr-Leu-|-Tyr-Trp, in which cleavage of the -Tyr-|-Leu- and -Tyr-|-Trp bonds also occurs).. Cleaves peptides in various proteins in a process that requires ATP hydrolysis. Has a chymotrypsin-like activity. Plays a major role in the degradation of misfolded proteins. In Cupriavidus metallidurans (strain ATCC 43123 / DSM 2839 / NBRC 102507 / CH34) (Ralstonia metallidurans), this protein is ATP-dependent Clp protease proteolytic subunit.